The primary structure comprises 190 residues: Xanthine phosphoribosyltransferase 1 (190 aa).

Xanthine contacts are provided by leucine 20 and asparagine 27. A 5-phospho-alpha-D-ribose 1-diphosphate-binding site is contributed by 129–133 (AQGCA). A xanthine-binding site is contributed by lysine 157.

The protein belongs to the purine/pyrimidine phosphoribosyltransferase family. Xpt subfamily. Homodimer.

Its subcellular location is the cytoplasm. The enzyme catalyses XMP + diphosphate = xanthine + 5-phospho-alpha-D-ribose 1-diphosphate. It participates in purine metabolism; XMP biosynthesis via salvage pathway; XMP from xanthine: step 1/1. Functionally, converts the preformed base xanthine, a product of nucleic acid breakdown, to xanthosine 5'-monophosphate (XMP), so it can be reused for RNA or DNA synthesis. The protein is Xanthine phosphoribosyltransferase 1 of Clostridium perfringens (strain ATCC 13124 / DSM 756 / JCM 1290 / NCIMB 6125 / NCTC 8237 / Type A).